The chain runs to 815 residues: Putative transcription factor phnE (815 aa).

Positions P522–L577 are disordered. A compositionally biased stretch (low complexity) spans S523–P547. Pro residues predominate over residues L548 to L559. Over residues T563–L577 the composition is skewed to low complexity.

It is found in the nucleus. Functionally, putative transcription factor that may be involved in the regulation of the expression of the gene cluster that mediates the biosynthesis of phenalenones such as herqueinone, compounds that have been reported to treat tumors, bacterial infections and/or mycoses, and rheumatic diseases. The chain is Putative transcription factor phnE from Penicillium herquei.